A 294-amino-acid polypeptide reads, in one-letter code: Foldase protein PrsA 1 (294 aa).

Residues 1–21 (MTKLKKVMISVIAATLLLLAG) form the signal peptide. The N-palmitoyl cysteine moiety is linked to residue Cys-22. The S-diacylglycerol cysteine moiety is linked to residue Cys-22. One can recognise a PpiC domain in the interval 135–226 (EPDITVRHIL…YGYHLIQLVK (92 aa)).

It belongs to the PrsA family.

Its subcellular location is the cell membrane. The enzyme catalyses [protein]-peptidylproline (omega=180) = [protein]-peptidylproline (omega=0). Its function is as follows. Plays a major role in protein secretion by helping the post-translocational extracellular folding of several secreted proteins. The protein is Foldase protein PrsA 1 (prsA1) of Listeria monocytogenes serovar 1/2a (strain ATCC BAA-679 / EGD-e).